The primary structure comprises 81 residues: Small ribosomal subunit protein uS17 (81 aa).

Belongs to the universal ribosomal protein uS17 family. In terms of assembly, part of the 30S ribosomal subunit.

In terms of biological role, one of the primary rRNA binding proteins, it binds specifically to the 5'-end of 16S ribosomal RNA. This is Small ribosomal subunit protein uS17 from Protochlamydia amoebophila (strain UWE25).